Here is a 247-residue protein sequence, read N- to C-terminus: Hydroxyacylglutathione hydrolase 1 (247 aa).

Zn(2+) contacts are provided by His-54, His-56, Asp-58, His-59, His-111, Asp-128, and His-165.

The protein belongs to the metallo-beta-lactamase superfamily. Glyoxalase II family. As to quaternary structure, monomer. Zn(2+) is required as a cofactor.

The catalysed reaction is an S-(2-hydroxyacyl)glutathione + H2O = a 2-hydroxy carboxylate + glutathione + H(+). It participates in secondary metabolite metabolism; methylglyoxal degradation; (R)-lactate from methylglyoxal: step 2/2. Functionally, thiolesterase that catalyzes the hydrolysis of S-D-lactoyl-glutathione to form glutathione and D-lactic acid. The protein is Hydroxyacylglutathione hydrolase 1 of Vibrio vulnificus (strain YJ016).